A 136-amino-acid chain; its full sequence is Protein BUNDLE SHEATH DEFECTIVE 2, chloroplastic (136 aa).

Residues 1–56 constitute a chloroplast transit peptide; it reads MANSLCFFSSPPTFCFQSPSKNPKPSHFFSTNDNTSSLVQKRELLQTSRSQSFEVK. The CR-type zinc-finger motif lies at 62-133; that stretch reads PQGTKPNSLV…AGFIGGFLST (72 aa). Zn(2+) is bound by residues Cys-72, Cys-75, Glu-78, Cys-80, Cys-83, Cys-86, Cys-107, Cys-110, Glu-115, Cys-118, and Cys-121.

This sequence belongs to the BSD2 chaperone family. As to quaternary structure, interacts with the RuBisCo large subunit (RbcL) assembled as an intermediate complex made of eight RbcL and eight BSD2 subunits.

It is found in the plastid. The protein localises to the chloroplast stroma. Functionally, chloroplast chaperone required for RuBisCo biogenesis and translational regulation of the RuBisCo large subunit (RbcL). Stabilizes an end-state assembly intermediate of eight RbcL subunits until the small subunits (RBCSs) become available to produce a complete stable RuBisCo complex containing eight small and eight large subunits. The chain is Protein BUNDLE SHEATH DEFECTIVE 2, chloroplastic from Arabidopsis thaliana (Mouse-ear cress).